A 228-amino-acid chain; its full sequence is MVAVSLKMSQPAAPPPPMGERARTRMLLALQSRGIHDPRVLEVMGALPRHDFVDEALAGHAYGDATLPIGEGQTLSQPYTVARMSQALELGYGMHVLEIGTGSGYQTAVLAALCRRVYTVERIPSLALLARERLERMGITNVRYRVGDGTLGWPEPRPFERIIVTAGAPATPERLKRQLEIGGRMIIPEGGKLNQQLICIQRTGPESWQRDVLEACRFVPLVGQQGWE.

The tract at residues 1-20 (MVAVSLKMSQPAAPPPPMGE) is disordered. Residue serine 76 is part of the active site.

Belongs to the methyltransferase superfamily. L-isoaspartyl/D-aspartyl protein methyltransferase family.

The protein localises to the cytoplasm. The enzyme catalyses [protein]-L-isoaspartate + S-adenosyl-L-methionine = [protein]-L-isoaspartate alpha-methyl ester + S-adenosyl-L-homocysteine. Functionally, catalyzes the methyl esterification of L-isoaspartyl residues in peptides and proteins that result from spontaneous decomposition of normal L-aspartyl and L-asparaginyl residues. It plays a role in the repair and/or degradation of damaged proteins. This Magnetococcus marinus (strain ATCC BAA-1437 / JCM 17883 / MC-1) protein is Protein-L-isoaspartate O-methyltransferase.